Consider the following 221-residue polypeptide: Ribonuclease 3 (221 aa).

An RNase III domain is found at 4–121; it reads LEQLEKKLGY…LWAAVYIDSG (118 aa). Mg(2+) is bound at residue E40. Residue D44 is part of the active site. 2 residues coordinate Mg(2+): D107 and E110. E110 is an active-site residue. Residues 151-219 enclose the DRBM domain; the sequence is DYKTILQEIT…AEELIKLLEE (69 aa).

Belongs to the ribonuclease III family. As to quaternary structure, homodimer. Requires Mg(2+) as cofactor.

The protein localises to the cytoplasm. The catalysed reaction is Endonucleolytic cleavage to 5'-phosphomonoester.. Functionally, digests double-stranded RNA. Involved in the processing of primary rRNA transcript to yield the immediate precursors to the large and small rRNAs (23S and 16S). Also processes some mRNAs, and tRNAs when they are encoded in the rRNA operon. Probably processes pre-crRNA and tracrRNA of type II CRISPR loci if present in the organism. The sequence is that of Ribonuclease 3 (rnc) from Aquifex aeolicus (strain VF5).